We begin with the raw amino-acid sequence, 285 residues long: Methylamine utilization protein MauF (285 aa).

A run of 7 helical transmembrane segments spans residues 39-59 (FIMM…MHST), 60-80 (MSVE…GGLL), 119-139 (YAIG…LLFA), 145-165 (YAVI…FGFL), 188-208 (VIGL…VQTP), 212-232 (IVTG…VIAV), and 265-285 (VEVD…LVML).

It localises to the cell membrane. It participates in one-carbon metabolism; methylamine degradation. The chain is Methylamine utilization protein MauF (mauF) from Methylophilus methylotrophus (Bacterium W3A1).